The following is a 634-amino-acid chain: DNA-directed RNA polymerase subunit gamma (634 aa).

The Zn(2+) site is built by C74, C76, C89, and C92. Mg(2+)-binding residues include D471, D473, and D475.

It belongs to the RNA polymerase beta' chain family. RpoC1 subfamily. As to quaternary structure, in cyanobacteria the RNAP catalytic core is composed of 2 alpha, 1 beta, 1 beta', 1 gamma and 1 omega subunit. When a sigma factor is associated with the core the holoenzyme is formed, which can initiate transcription. Mg(2+) serves as cofactor. Zn(2+) is required as a cofactor.

The enzyme catalyses RNA(n) + a ribonucleoside 5'-triphosphate = RNA(n+1) + diphosphate. DNA-dependent RNA polymerase catalyzes the transcription of DNA into RNA using the four ribonucleoside triphosphates as substrates. This is DNA-directed RNA polymerase subunit gamma from Prochlorococcus marinus (strain MIT 9312).